The sequence spans 218 residues: N-(5'-phosphoribosyl)anthranilate isomerase (218 aa).

This sequence belongs to the TrpF family.

It carries out the reaction N-(5-phospho-beta-D-ribosyl)anthranilate = 1-(2-carboxyphenylamino)-1-deoxy-D-ribulose 5-phosphate. Its pathway is amino-acid biosynthesis; L-tryptophan biosynthesis; L-tryptophan from chorismate: step 3/5. The polypeptide is N-(5'-phosphoribosyl)anthranilate isomerase (Bordetella pertussis (strain Tohama I / ATCC BAA-589 / NCTC 13251)).